A 91-amino-acid chain; its full sequence is Large ribosomal subunit protein uL23 (91 aa).

It belongs to the universal ribosomal protein uL23 family. Part of the 50S ribosomal subunit. Contacts protein L29, and trigger factor when it is bound to the ribosome.

In terms of biological role, one of the early assembly proteins it binds 23S rRNA. One of the proteins that surrounds the polypeptide exit tunnel on the outside of the ribosome. Forms the main docking site for trigger factor binding to the ribosome. The chain is Large ribosomal subunit protein uL23 from Staphylococcus haemolyticus (strain JCSC1435).